The following is a 487-amino-acid chain: Glutamyl-tRNA(Gln) amidotransferase subunit A (487 aa).

Active-site charge relay system residues include lysine 79 and serine 158. Serine 182 serves as the catalytic Acyl-ester intermediate.

This sequence belongs to the amidase family. GatA subfamily. In terms of assembly, heterotrimer of A, B and C subunits.

It catalyses the reaction L-glutamyl-tRNA(Gln) + L-glutamine + ATP + H2O = L-glutaminyl-tRNA(Gln) + L-glutamate + ADP + phosphate + H(+). Functionally, allows the formation of correctly charged Gln-tRNA(Gln) through the transamidation of misacylated Glu-tRNA(Gln) in organisms which lack glutaminyl-tRNA synthetase. The reaction takes place in the presence of glutamine and ATP through an activated gamma-phospho-Glu-tRNA(Gln). The protein is Glutamyl-tRNA(Gln) amidotransferase subunit A of Ehrlichia ruminantium (strain Welgevonden).